Here is a 250-residue protein sequence, read N- to C-terminus: HTH-type transcriptional regulator SarS (250 aa).

DNA-binding regions (H-T-H motif) lie at residues 53 to 76 (FKKI…VLVK) and 177 to 200 (LKDL…NLKK).

This sequence belongs to the SarA family.

Its subcellular location is the cytoplasm. Its function is as follows. Transcriptional regulator that controls expression of some virulence factors in a cell density-dependent manner. The sequence is that of HTH-type transcriptional regulator SarS (sarS) from Staphylococcus aureus (strain Mu3 / ATCC 700698).